The primary structure comprises 896 residues: Phosphatidate phosphatase LPIN2 (896 aa).

The segment at 1 to 108 (MNYVGQLAGQ…LPAYLATSPI (108 aa)) is N-LIP. At Ser106 the chain carries Phosphoserine. The disordered stretch occupies residues 120–208 (TPLVKSGGDE…SSNASLKEEE (89 aa)). The segment covering 152 to 162 (VKKKKRRRKKY) has biased composition (basic residues). The short motif at 153 to 158 (KKKKRR) is the Nuclear localization signal element. Residues Ser174, Ser186, Ser187, Ser243, and Ser303 each carry the phosphoserine modification. Disordered regions lie at residues 370 to 405 (AEAPSESKPAAKVDSPSKKKGVHKRSQHQGPDDIYL) and 420 to 459 (FPKSESEPGSRQWPESDTLSGSQSPQSVGSAAADSGTECL). Over residues 387–396 (KKKGVHKRSQ) the composition is skewed to basic residues. Polar residues predominate over residues 426–448 (EPGSRQWPESDTLSGSQSPQSVG). Ser566 carries the phosphoserine modification. A compositionally biased stretch (basic and acidic residues) spans 569 to 579 (KQLPESKEGKS). Residues 569 to 636 (KQLPESKEGK…LSHGSTTSYK (68 aa)) are disordered. Residues 604–617 (SSSDEGSQELEESI) show a composition bias toward acidic residues. Residues 635–837 (YKKSLRLSSD…RIFTVNPKGE (203 aa)) are C-LIP. A DXDXT motif motif is present at residues 689-693 (DIDGT). An LXXIL motif motif is present at residues 700 to 704 (LGQIL).

It belongs to the lipin family. Mg(2+) is required as a cofactor. As to expression, expressed in liver, lung, kidney, placenta, spleen, thymus, lymph node, prostate, testes, small intestine, and colon.

It is found in the nucleus. The protein localises to the cytoplasm. It localises to the cytosol. The protein resides in the endoplasmic reticulum membrane. It catalyses the reaction a 1,2-diacyl-sn-glycero-3-phosphate + H2O = a 1,2-diacyl-sn-glycerol + phosphate. Its activity is regulated as follows. Inhibited by N-ethylmaleimide. Its function is as follows. Acts as a magnesium-dependent phosphatidate phosphatase enzyme which catalyzes the conversion of phosphatidic acid to diacylglycerol during triglyceride, phosphatidylcholine and phosphatidylethanolamine biosynthesis in the endoplasmic reticulum membrane. Plays important roles in controlling the metabolism of fatty acids at different levels. Also acts as a nuclear transcriptional coactivator for PPARGC1A to modulate lipid metabolism. This Homo sapiens (Human) protein is Phosphatidate phosphatase LPIN2.